We begin with the raw amino-acid sequence, 645 residues long: UPF0313 protein CLM_0251 (645 aa).

In terms of domain architecture, Radical SAM core spans 295-566; it reads AIKEVKFSIT…RMQRALLQFS (272 aa). Residues Cys-309, Cys-313, and Cys-316 each coordinate [4Fe-4S] cluster. Residues 598–645 are disordered; sequence NKPYKKSHKKNNAKNNNNHYNKNNNYNKNKDISKKNKKNSLSKHKKRK. The span at 600–609 shows a compositional bias: basic residues; that stretch reads PYKKSHKKNN. The span at 610–624 shows a compositional bias: low complexity; it reads AKNNNNHYNKNNNYN. Residues 632-645 are compositionally biased toward basic residues; that stretch reads KNKKNSLSKHKKRK.

It belongs to the UPF0313 family. [4Fe-4S] cluster serves as cofactor.

In Clostridium botulinum (strain Kyoto / Type A2), this protein is UPF0313 protein CLM_0251.